A 566-amino-acid chain; its full sequence is Glutamate--tRNA ligase (566 aa).

Positions 104–114 match the 'HIGH' region motif; sequence PNPDGPLHLGN.

The protein belongs to the class-I aminoacyl-tRNA synthetase family. Glutamate--tRNA ligase type 2 subfamily.

The protein resides in the cytoplasm. It carries out the reaction tRNA(Glu) + L-glutamate + ATP = L-glutamyl-tRNA(Glu) + AMP + diphosphate. Functionally, catalyzes the attachment of glutamate to tRNA(Glu) in a two-step reaction: glutamate is first activated by ATP to form Glu-AMP and then transferred to the acceptor end of tRNA(Glu). The protein is Glutamate--tRNA ligase of Metallosphaera sedula (strain ATCC 51363 / DSM 5348 / JCM 9185 / NBRC 15509 / TH2).